We begin with the raw amino-acid sequence, 586 residues long: Malonate--CoA ligase ACSF3, mitochondrial (586 aa).

A mitochondrion-targeting transit peptide spans 1 to 89 (MPLPYVGMAL…SREICQLRAC (89 aa)). ATP-binding positions include 203-211 (TSGTTGRPK), aspartate 457, arginine 471, and lysine 563.

Belongs to the ATP-dependent AMP-binding enzyme family.

The protein resides in the mitochondrion. It catalyses the reaction tetracosanoate + ATP + CoA = tetracosanoyl-CoA + AMP + diphosphate. The enzyme catalyses malonate + ATP + CoA = malonyl-CoA + AMP + diphosphate. In terms of biological role, catalyzes the initial reaction in intramitochondrial fatty acid synthesis, by activating malonate and methylmalonate, but not acetate, into their respective CoA thioester. May have some preference toward very-long-chain substrates. The polypeptide is Malonate--CoA ligase ACSF3, mitochondrial (Bos taurus (Bovine)).